The chain runs to 85 residues: U4-theraphotoxin-Hhn1a (85 aa).

Positions 1-22 are cleaved as a signal peptide; that stretch reads MKVTLIAILTCAAVLVLHTTAA. The propeptide occupies 23–48; sequence EELEAEGQLMEVGMPDTELAAVDEER. Intrachain disulfides connect Cys52–Cys66, Cys56–Cys77, and Cys71–Cys82.

It belongs to the neurotoxin 12 (Hwtx-2) family. 02 (Hwtx-2) subfamily. As to quaternary structure, monomer. Expressed by the venom gland.

Its subcellular location is the secreted. Functionally, neurotoxin active on both insects and mammals. The sequence is that of U4-theraphotoxin-Hhn1a from Cyriopagopus hainanus (Chinese bird spider).